The following is a 651-amino-acid chain: Acetyl-coenzyme A synthetase (651 aa).

CoA contacts are provided by residues 189-192, T311, and N335; that span reads RGGK. Residues 387–389, 411–416, D500, and R515 each bind ATP; these read GEP and DTWWQT. S523 is a binding site for CoA. Residue R526 participates in ATP binding. The Mg(2+) site is built by V537, H539, and V542. Residue R584 coordinates CoA. K609 is subject to N6-acetyllysine.

This sequence belongs to the ATP-dependent AMP-binding enzyme family. It depends on Mg(2+) as a cofactor. In terms of processing, acetylated. Deacetylation by the SIR2-homolog deacetylase activates the enzyme.

The enzyme catalyses acetate + ATP + CoA = acetyl-CoA + AMP + diphosphate. In terms of biological role, catalyzes the conversion of acetate into acetyl-CoA (AcCoA), an essential intermediate at the junction of anabolic and catabolic pathways. AcsA undergoes a two-step reaction. In the first half reaction, AcsA combines acetate with ATP to form acetyl-adenylate (AcAMP) intermediate. In the second half reaction, it can then transfer the acetyl group from AcAMP to the sulfhydryl group of CoA, forming the product AcCoA. This Rhizobium etli (strain ATCC 51251 / DSM 11541 / JCM 21823 / NBRC 15573 / CFN 42) protein is Acetyl-coenzyme A synthetase.